Reading from the N-terminus, the 501-residue chain is Ribose import ATP-binding protein RbsA (501 aa).

ABC transporter domains are found at residues 6–242 (LQLS…VGRK) and 253–495 (VHGQ…VGKK). Position 38–45 (38–45 (GENGAGKS)) interacts with ATP.

The protein belongs to the ABC transporter superfamily. Ribose importer (TC 3.A.1.2.1) family. The complex is composed of an ATP-binding protein (RbsA), two transmembrane proteins (RbsC) and a solute-binding protein (RbsB).

The protein localises to the cell inner membrane. The enzyme catalyses D-ribose(out) + ATP + H2O = D-ribose(in) + ADP + phosphate + H(+). Part of the ABC transporter complex RbsABC involved in ribose import. Responsible for energy coupling to the transport system. This is Ribose import ATP-binding protein RbsA from Vibrio vulnificus (strain YJ016).